The sequence spans 121 residues: Large ribosomal subunit protein bL12 (121 aa).

This sequence belongs to the bacterial ribosomal protein bL12 family. Homodimer. Part of the ribosomal stalk of the 50S ribosomal subunit. Forms a multimeric L10(L12)X complex, where L10 forms an elongated spine to which 2 to 4 L12 dimers bind in a sequential fashion. Binds GTP-bound translation factors.

Its function is as follows. Forms part of the ribosomal stalk which helps the ribosome interact with GTP-bound translation factors. Is thus essential for accurate translation. This Macrococcus caseolyticus (strain JCSC5402) (Macrococcoides caseolyticum) protein is Large ribosomal subunit protein bL12.